The primary structure comprises 327 residues: Ferredoxin--NADP reductase (327 aa).

Residues Thr-18, Asp-37, Gln-45, Tyr-50, Ala-90, Phe-124, Asp-283, and Ser-324 each contribute to the FAD site.

Belongs to the ferredoxin--NADP reductase type 2 family. As to quaternary structure, homodimer. FAD is required as a cofactor.

It carries out the reaction 2 reduced [2Fe-2S]-[ferredoxin] + NADP(+) + H(+) = 2 oxidized [2Fe-2S]-[ferredoxin] + NADPH. The chain is Ferredoxin--NADP reductase from Saccharopolyspora erythraea (strain ATCC 11635 / DSM 40517 / JCM 4748 / NBRC 13426 / NCIMB 8594 / NRRL 2338).